Here is a 397-residue protein sequence, read N- to C-terminus: MSKIIAINAGSSSLKFQLFEMPSETVLTKGLVERIGLEDSIFTITVDGEKQKEITNIPDHAVAVNMLLKKLTENGIVKSLDEIGGIGHRVVHGGEKFADSVLITDEVLADIEELSDLAPLHNPANVVGIKAFQEVLPNVPAVAVFDTAFHQTMPESAFLYSLPYEYYEKFGIRKYGFHGTSHKYVTERAAELLGRPIESLSLLSCHLGNGASIAAVEGGKSIDTSMGFTPLAGVTMGTRSGNLDPALIPYIMEKTGQTVEEVVNVLNKKSGMLGLTGYSSDLRDIIAKEEEGDHRAKVALDVFVSRIHKYIGSYTARMKGVDAIIFTAGVGENSAIIRERVLEGLEYMGVYFDAKRNNVFGEEAFISFPHSPVKIIVIPTDEEVMIARDVLRLGDIG.

Asn-8 is a Mg(2+) binding site. Residue Lys-15 participates in ATP binding. Arg-89 lines the substrate pocket. The active-site Proton donor/acceptor is Asp-146. ATP-binding positions include 206–210 (HLGNG), 281–283 (DLR), and 329–333 (GVGEN). Glu-382 lines the Mg(2+) pocket.

It belongs to the acetokinase family. As to quaternary structure, homodimer. It depends on Mg(2+) as a cofactor. Mn(2+) is required as a cofactor.

It localises to the cytoplasm. It carries out the reaction acetate + ATP = acetyl phosphate + ADP. It functions in the pathway metabolic intermediate biosynthesis; acetyl-CoA biosynthesis; acetyl-CoA from acetate: step 1/2. Its function is as follows. Catalyzes the formation of acetyl phosphate from acetate and ATP. Can also catalyze the reverse reaction. The chain is Acetate kinase from Bacillus cereus (strain ATCC 14579 / DSM 31 / CCUG 7414 / JCM 2152 / NBRC 15305 / NCIMB 9373 / NCTC 2599 / NRRL B-3711).